The chain runs to 121 residues: Basic phospholipase A2 BmjeTX-I (121 aa).

Cystine bridges form between Cys-26–Cys-114, Cys-28–Cys-45, Cys-44–Cys-95, Cys-50–Cys-121, Cys-51–Cys-88, Cys-58–Cys-82, and Cys-76–Cys-86. Residues Tyr-27, Gly-29, and Gly-31 each contribute to the Ca(2+) site. His-48 is an active-site residue. Residue Asp-49 participates in Ca(2+) binding. Asp-89 is a catalytic residue.

Ca(2+) serves as cofactor. As to expression, expressed by the venom gland.

It is found in the secreted. It catalyses the reaction a 1,2-diacyl-sn-glycero-3-phosphocholine + H2O = a 1-acyl-sn-glycero-3-phosphocholine + a fatty acid + H(+). Its function is as follows. Snake venom phospholipase A2 (PLA2) that induces a slight blockade of neuromuscular contraction in an indirectly stimulated chick biventer cervicis nerve-muscle preparation. Does not inhibit contraction of chick biventer cervicic nerve-muscle preparation in response to treatment with acetylcholine or KCl. The neuromuscular blockade is mediated by inhibitory action at the presynaptic motor nerve endings. Lyses skeletal myoblasts and myotubes in vitro, and intramuscular injection causes local muscle necrosis. Induces edema in the mouse foot pad. Induces a transient increase of IL-6 levels. PLA2 catalyzes the calcium-dependent hydrolysis of the 2-acyl groups in 3-sn-phosphoglycerides. In Bothrops marajoensis (Marajo lancehead), this protein is Basic phospholipase A2 BmjeTX-I.